The following is a 195-amino-acid chain: MIERSGYGIIAASLLLSAVAYLLHPLISALFVGFALFTAYFFRDPERKIGEGVVSPADGRIDYLEGRRLEIFMSPFDCHINRAPWGGKVLSVKFIEGSTPPAFIRKSGVRTNEILIETEHGVFRVLQMAGIFARRIVSYVSEGDVVKKGQKIGMIRFGSRVVLEVPEGFRFVRGVGEKVKAGETVALRDESFQGS.

S159 functions as the Schiff-base intermediate with substrate; via pyruvic acid in the catalytic mechanism. The residue at position 159 (S159) is a Pyruvic acid (Ser); by autocatalysis.

It belongs to the phosphatidylserine decarboxylase family. PSD-A subfamily. Heterodimer of a large membrane-associated beta subunit and a small pyruvoyl-containing alpha subunit. Requires pyruvate as cofactor. Is synthesized initially as an inactive proenzyme. Formation of the active enzyme involves a self-maturation process in which the active site pyruvoyl group is generated from an internal serine residue via an autocatalytic post-translational modification. Two non-identical subunits are generated from the proenzyme in this reaction, and the pyruvate is formed at the N-terminus of the alpha chain, which is derived from the carboxyl end of the proenzyme. The autoendoproteolytic cleavage occurs by a canonical serine protease mechanism, in which the side chain hydroxyl group of the serine supplies its oxygen atom to form the C-terminus of the beta chain, while the remainder of the serine residue undergoes an oxidative deamination to produce ammonia and the pyruvoyl prosthetic group on the alpha chain. During this reaction, the Ser that is part of the protease active site of the proenzyme becomes the pyruvoyl prosthetic group, which constitutes an essential element of the active site of the mature decarboxylase. In terms of processing, is synthesized initially as an inactive proenzyme. Formation of the active enzyme involves a self-maturation process in which the active site pyruvoyl group is generated from an internal serine residue via an autocatalytic post-translational modification. Two non-identical subunits are generated from the proenzyme in this reaction, and the pyruvate is formed at the N-terminus of the alpha chain, which is derived from the carboxyl end of the proenzyme. The post-translation cleavage follows an unusual pathway, termed non-hydrolytic serinolysis, in which the side chain hydroxyl group of the serine supplies its oxygen atom to form the C-terminus of the beta chain, while the remainder of the serine residue undergoes an oxidative deamination to produce ammonia and the pyruvoyl prosthetic group on the alpha chain.

The protein localises to the cell membrane. The catalysed reaction is archaetidylserine + H(+) = archaetidylethanolamine + CO2. In terms of biological role, catalyzes the formation of archaetidylethanolamine (PtdEtn) from archaetidylserine (PtdSer). This Archaeoglobus fulgidus (strain ATCC 49558 / DSM 4304 / JCM 9628 / NBRC 100126 / VC-16) protein is Putative archaetidylserine decarboxylase proenzyme.